The primary structure comprises 63 residues: Large ribosomal subunit protein bL35 (63 aa).

Belongs to the bacterial ribosomal protein bL35 family.

In Campylobacter jejuni subsp. jejuni serotype O:2 (strain ATCC 700819 / NCTC 11168), this protein is Large ribosomal subunit protein bL35.